A 515-amino-acid polypeptide reads, in one-letter code: G-protein coupled receptor 176 (515 aa).

Over residues 1–16 (MGHNGSWISPNASEPH) the composition is skewed to polar residues. A disordered region spans residues 1–20 (MGHNGSWISPNASEPHNASG). The Extracellular segment spans residues 1–42 (MGHNGSWISPNASEPHNASGAEAAGVNRSALGEFGEAQLYRQ). N-linked (GlcNAc...) asparagine glycosylation is found at N4, N11, N17, and N27. The chain crosses the membrane as a helical span at residues 43–63 (FTTTVQVVIFIGSLLGNFMVL). Residues 64–82 (WSTCRTTVFKSVTNRFIKN) lie on the Cytoplasmic side of the membrane. The chain crosses the membrane as a helical span at residues 83–103 (LACSGICASLVCVPFDIILST). Residues 104-118 (SPHCCWWIYTMLFCK) lie on the Extracellular side of the membrane. A helical transmembrane segment spans residues 119-139 (VVKFLHKVFCSVTILSFPAIA). Over 140–160 (LDRYYSVLYPLERKISDAKSR) the chain is Cytoplasmic. A helical transmembrane segment spans residues 161–181 (ELVMYIWAHAVVASVPVFAVT). Topologically, residues 182–207 (NVADIYATSTCTEVWSNSLGHLVYVL) are extracellular. A helical transmembrane segment spans residues 208–228 (VYNITTVIVPVVVVFLFLILI). The Cytoplasmic portion of the chain corresponds to 229-267 (RRALSASQKKKVIIAALRTPQNTISIPYASQREAELHAT). Residues 268–288 (LLSMVMVFILCSVPYATLVVY) form a helical membrane-spanning segment. The Extracellular portion of the chain corresponds to 289–299 (QTVLNVPDTSV). A helical transmembrane segment spans residues 300-320 (FLLLTAVWLPKVSLLANPVLF). Over 321–515 (LTVNKSVRKC…KVSIFPKVDS (195 aa)) the chain is Cytoplasmic.

It belongs to the G-protein coupled receptor 1 family.

It localises to the cell membrane. Functionally, orphan receptor involved in normal circadian rhythm behavior. Acts through the G-protein subclass G(z)-alpha and has an agonist-independent basal activity to repress cAMP production. This chain is G-protein coupled receptor 176 (GPR176), found in Homo sapiens (Human).